We begin with the raw amino-acid sequence, 563 residues long: MAFNDLLQQVGGVGRFQQIQVTLVVLPLLLMASHNTLQNFTAAIPTHHCRPPADANLSKNGGLEVWLPRDRQGQPESCLRFTSPQWGLPFLNGTEANGTGATEPCTDGWIYDNSTFPSTIVTEWDLVCSHRALRQLAQSLYMVGVLLGAMVFGYLADRLGRRKVLILNYLQTAVSGTCAAFAPNFPIYCAFRLLSGMALAGISLNCMTLNVEWMPIHTRACVGTLIGYVYSLGQFLLAGVAYAVPHWRHLQLLVSAPFFAFFIYSWFFIESARWHSSSGRLDLTLRALQRVARINGKREEGAKLSMEVLRASLQKELTMGKGQASAMELLRCPTLRHLFLCLSMLWFATSFAYYGLVMDLQGFGVSIYLIQVIFGAVDLPAKLVGFLVINSLGRRPAQMAALLLAGICILLNGVIPQDQSIVRTSLAVLGKGCLAASFNCIFLYTGELYPTMIRQTGMGMGSTMARVGSIVSPLVSMTAELYPSMPLFIYGAVPVAASAVTVLLPETLGQPLPDTVQDLESRWAPTQKEAGIYPRKGKQTRQQQEHQKYMVPLQASAQEKNGL.

The Cytoplasmic portion of the chain corresponds to 1–9; that stretch reads MAFNDLLQQ. A helical membrane pass occupies residues 10–30; it reads VGGVGRFQQIQVTLVVLPLLL. Residues 31–135 are Extracellular-facing; it reads MASHNTLQNF…LVCSHRALRQ (105 aa). 5 N-linked (GlcNAc...) asparagine glycosylation sites follow: asparagine 39, asparagine 56, asparagine 92, asparagine 97, and asparagine 113. The helical transmembrane segment at 136-156 threads the bilayer; that stretch reads LAQSLYMVGVLLGAMVFGYLA. Topologically, residues 157-164 are cytoplasmic; it reads DRLGRRKV. Residues 165 to 187 traverse the membrane as a helical segment; it reads LILNYLQTAVSGTCAAFAPNFPI. Residues 188-190 lie on the Extracellular side of the membrane; sequence YCA. A helical membrane pass occupies residues 191–213; it reads FRLLSGMALAGISLNCMTLNVEW. The Cytoplasmic portion of the chain corresponds to 214-224; sequence MPIHTRACVGT. Residues 225–245 traverse the membrane as a helical segment; it reads LIGYVYSLGQFLLAGVAYAVP. Topologically, residues 246–248 are extracellular; sequence HWR. A helical membrane pass occupies residues 249-269; the sequence is HLQLLVSAPFFAFFIYSWFFI. Residues 270 to 337 lie on the Cytoplasmic side of the membrane; that stretch reads ESARWHSSSG…ELLRCPTLRH (68 aa). Residues 338–358 form a helical membrane-spanning segment; the sequence is LFLCLSMLWFATSFAYYGLVM. Residues 359-368 are Extracellular-facing; it reads DLQGFGVSIY. The chain crosses the membrane as a helical span at residues 369–389; it reads LIQVIFGAVDLPAKLVGFLVI. Over 390–395 the chain is Cytoplasmic; it reads NSLGRR. A helical membrane pass occupies residues 396–416; sequence PAQMAALLLAGICILLNGVIP. The Extracellular segment spans residues 417–425; that stretch reads QDQSIVRTS. A helical membrane pass occupies residues 426–446; it reads LAVLGKGCLAASFNCIFLYTG. Residues 447–455 are Cytoplasmic-facing; that stretch reads ELYPTMIRQ. The chain crosses the membrane as a helical span at residues 456-475; it reads TGMGMGSTMARVGSIVSPLV. Over 476–484 the chain is Extracellular; that stretch reads SMTAELYPS. Residues 485–505 traverse the membrane as a helical segment; the sequence is MPLFIYGAVPVAASAVTVLLP. The Cytoplasmic portion of the chain corresponds to 506–563; sequence ETLGQPLPDTVQDLESRWAPTQKEAGIYPRKGKQTRQQQEHQKYMVPLQASAQEKNGL. Residues 525–563 are disordered; it reads PTQKEAGIYPRKGKQTRQQQEHQKYMVPLQASAQEKNGL.

Belongs to the major facilitator (TC 2.A.1) superfamily. Organic cation transporter (TC 2.A.1.19) family. Glycosylated. Glycosylation at Asn-113 may occur at a secondary level. Glycosylation is necessary for proper targeting of the transporter to the plasma membrane. Strongly expressed in kidney. Expressed at lower level in liver, skeletal muscle, brain and placenta. In kidney, found at the basolateral membrane of the proximal tubule. In testis, primarily localized to the basal membrane of Sertoli cells and weakly expressed in Leydig cells and vascular endothelial cells.

It is found in the basolateral cell membrane. The protein localises to the basal cell membrane. It carries out the reaction (6R)-L-erythro-5,6,7,8-tetrahydrobiopterin(out) + a dicarboxylate(in) = (6R)-L-erythro-5,6,7,8-tetrahydrobiopterin(in) + a dicarboxylate(out). The catalysed reaction is L-erythro-7,8-dihydrobiopterin(out) + a dicarboxylate(in) = L-erythro-7,8-dihydrobiopterin(in) + a dicarboxylate(out). It catalyses the reaction L-sepiapterin(out) + a dicarboxylate(in) = L-sepiapterin(in) + a dicarboxylate(out). The enzyme catalyses prostaglandin F2alpha(out) + a dicarboxylate(in) = prostaglandin F2alpha(in) + a dicarboxylate(out). It carries out the reaction prostaglandin E2(out) + a dicarboxylate(in) = prostaglandin E2(in) + a dicarboxylate(out). The catalysed reaction is 3',5'-cyclic AMP(out) + a dicarboxylate(in) = 3',5'-cyclic AMP(in) + a dicarboxylate(out). It catalyses the reaction 3',5'-cyclic GMP(out) + a dicarboxylate(in) = 3',5'-cyclic GMP(in) + a dicarboxylate(out). The enzyme catalyses urate(out) + a dicarboxylate(in) = urate(in) + a dicarboxylate(out). It carries out the reaction kynurenate(out) + glutarate(in) = kynurenate(in) + glutarate(out). The catalysed reaction is (indol-3-yl)acetate(out) + a dicarboxylate(in) = (indol-3-yl)acetate(in) + a dicarboxylate(out). It catalyses the reaction indoxyl sulfate(out) + a dicarboxylate(in) = indoxyl sulfate(in) + a dicarboxylate(out). The enzyme catalyses N-benzoylglycine(out) + a dicarboxylate(in) = N-benzoylglycine(in) + a dicarboxylate(out). It carries out the reaction 3-carboxy-4-methyl-5-propyl-2-furanpropanoate(out) + a dicarboxylate(in) = 3-carboxy-4-methyl-5-propyl-2-furanpropanoate(in) + a dicarboxylate(out). Its function is as follows. Secondary active transporter that functions as a Na(+)-independent organic anion (OA)/dicarboxylate antiporter where the uptake of one molecule of OA into the cell is coupled with an efflux of one molecule of intracellular dicarboxylate such as 2-oxoglutarate or glutarate. Mediates the uptake of OA across the basolateral side of proximal tubule epithelial cells, thereby contributing to the renal elimination of endogenous OA from the systemic circulation into the urine. Functions as a biopterin transporters involved in the uptake and the secretion of coenzymes tetrahydrobiopterin (BH4), dihydrobiopterin (BH2) and sepiapterin to urine, thereby determining baseline levels of blood biopterins. Transports prostaglandin E2 (PGE2) and prostaglandin F2-alpha (PGF2-alpha) and may contribute to their renal excretion. Also mediates the uptake of cyclic nucleotides such as cAMP and cGMP. Involved in the transport of neuroactive tryptophan metabolites kynurenate (KYNA) and xanthurenate (XA) and may contribute to their secretion from the brain. May transport glutamate. Also involved in the disposition of uremic toxins and potentially toxic xenobiotics by the renal organic anion secretory pathway, helping reduce their undesired toxicological effects on the body. Uremic toxins include the indoxyl sulfate (IS), hippurate/N-benzoylglycine (HA), indole acetate (IA), 3-carboxy-4- methyl-5-propyl-2-furanpropionate (CMPF) and urate. Xenobiotics include the mycotoxin ochratoxin (OTA). May also contribute to the transport of organic compounds in testes across the blood-testis-barrier. This is Solute carrier family 22 member 6 from Homo sapiens (Human).